Consider the following 647-residue polypeptide: Threonine--tRNA ligase (647 aa).

The 61-residue stretch at methionine 1–threonine 61 folds into the TGS domain. The interval aspartate 240 to proline 538 is catalytic. Zn(2+)-binding residues include cysteine 334, histidine 385, and histidine 515.

The protein belongs to the class-II aminoacyl-tRNA synthetase family. Homodimer. It depends on Zn(2+) as a cofactor.

Its subcellular location is the cytoplasm. It carries out the reaction tRNA(Thr) + L-threonine + ATP = L-threonyl-tRNA(Thr) + AMP + diphosphate + H(+). In terms of biological role, catalyzes the attachment of threonine to tRNA(Thr) in a two-step reaction: L-threonine is first activated by ATP to form Thr-AMP and then transferred to the acceptor end of tRNA(Thr). Also edits incorrectly charged L-seryl-tRNA(Thr). This Streptococcus pyogenes serotype M2 (strain MGAS10270) protein is Threonine--tRNA ligase.